The sequence spans 499 residues: Probable malate:quinone oxidoreductase (499 aa).

This sequence belongs to the MQO family. FAD is required as a cofactor.

It catalyses the reaction (S)-malate + a quinone = a quinol + oxaloacetate. It functions in the pathway carbohydrate metabolism; tricarboxylic acid cycle; oxaloacetate from (S)-malate (quinone route): step 1/1. The sequence is that of Probable malate:quinone oxidoreductase from Exiguobacterium sp. (strain ATCC BAA-1283 / AT1b).